Here is a 131-residue protein sequence, read N- to C-terminus: D-ribose pyranase (131 aa).

Residue His20 is the Proton donor of the active site. Substrate-binding positions include Asp28, His98, and 120–122; that span reads YSN.

Belongs to the RbsD / FucU family. RbsD subfamily. As to quaternary structure, homodecamer.

Its subcellular location is the cytoplasm. It catalyses the reaction beta-D-ribopyranose = beta-D-ribofuranose. The protein operates within carbohydrate metabolism; D-ribose degradation; D-ribose 5-phosphate from beta-D-ribopyranose: step 1/2. In terms of biological role, catalyzes the interconversion of beta-pyran and beta-furan forms of D-ribose. The protein is D-ribose pyranase of Lactobacillus johnsonii (strain CNCM I-12250 / La1 / NCC 533).